We begin with the raw amino-acid sequence, 284 residues long: RNase adapter protein RapZ (284 aa).

Position 8–15 (G8–S15) interacts with ATP. Residue D56–N59 participates in GTP binding. Positions R266 to P284 are RNA-binding.

This sequence belongs to the RapZ-like family. RapZ subfamily. Homotrimer.

In terms of biological role, modulates the synthesis of GlmS, by affecting the processing and stability of the regulatory small RNA GlmZ. When glucosamine-6-phosphate (GlcN6P) concentrations are high in the cell, RapZ binds GlmZ and targets it to cleavage by RNase E. Consequently, GlmZ is inactivated and unable to activate GlmS synthesis. Under low GlcN6P concentrations, RapZ is sequestered and inactivated by an other regulatory small RNA, GlmY, preventing GlmZ degradation and leading to synthesis of GlmS. The chain is RNase adapter protein RapZ from Escherichia coli O1:K1 / APEC.